The sequence spans 265 residues: Type II pantothenate kinase (265 aa).

Residue Asp6–Lys13 coordinates ATP. Glu70 acts as the Proton acceptor in catalysis. Residues Thr99, Gly121–Gln125, Tyr137, and Ser225 contribute to the ATP site.

It belongs to the type II pantothenate kinase family. As to quaternary structure, homodimer.

It is found in the cytoplasm. The enzyme catalyses (R)-pantothenate + ATP = (R)-4'-phosphopantothenate + ADP + H(+). It participates in cofactor biosynthesis; coenzyme A biosynthesis; CoA from (R)-pantothenate: step 1/5. In terms of biological role, catalyzes the phosphorylation of pantothenate (Pan), the first step in CoA biosynthesis. The sequence is that of Type II pantothenate kinase from Staphylococcus epidermidis (strain ATCC 35984 / DSM 28319 / BCRC 17069 / CCUG 31568 / BM 3577 / RP62A).